A 353-amino-acid chain; its full sequence is Photosystem II protein D1 (353 aa).

Residue Thr2 is modified to N-acetylthreonine. Thr2 carries the phosphothreonine modification. 3 consecutive transmembrane segments (helical) span residues 29–46 (YIGWFGVLMIPTLLTATS), 118–133 (HFLLGVACYMGREWEL), and 142–156 (WIAVAYSAPVAAATA). A chlorophyll a-binding site is contributed by His118. Tyr126 is a pheophytin a binding site. Residues Asp170 and Glu189 each contribute to the [CaMn4O5] cluster site. The helical transmembrane segment at 197–218 (FHMLGVAGVFGGSLFSAMHGSL) threads the bilayer. His198 contributes to the chlorophyll a binding site. A quinone-binding positions include His215 and 264–265 (SF). His215 serves as a coordination point for Fe cation. Fe cation is bound at residue His272. A helical membrane pass occupies residues 274 to 288 (FLAAWPVVGIWFTAL). [CaMn4O5] cluster is bound by residues His332, Glu333, Asp342, and Ala344. Residues 345-353 (AVEAPSTNG) constitute a propeptide that is removed on maturation.

Belongs to the reaction center PufL/M/PsbA/D family. As to quaternary structure, PSII is composed of 1 copy each of membrane proteins PsbA, PsbB, PsbC, PsbD, PsbE, PsbF, PsbH, PsbI, PsbJ, PsbK, PsbL, PsbM, PsbT, PsbX, PsbY, PsbZ, Psb30/Ycf12, at least 3 peripheral proteins of the oxygen-evolving complex and a large number of cofactors. It forms dimeric complexes. Requires The D1/D2 heterodimer binds P680, chlorophylls that are the primary electron donor of PSII, and subsequent electron acceptors. It shares a non-heme iron and each subunit binds pheophytin, quinone, additional chlorophylls, carotenoids and lipids. D1 provides most of the ligands for the Mn4-Ca-O5 cluster of the oxygen-evolving complex (OEC). There is also a Cl(-1) ion associated with D1 and D2, which is required for oxygen evolution. The PSII complex binds additional chlorophylls, carotenoids and specific lipids. as cofactor. Tyr-161 forms a radical intermediate that is referred to as redox-active TyrZ, YZ or Y-Z. Post-translationally, C-terminally processed by CTPA; processing is essential to allow assembly of the oxygen-evolving complex and thus photosynthetic growth.

It is found in the plastid. The protein localises to the chloroplast thylakoid membrane. It carries out the reaction 2 a plastoquinone + 4 hnu + 2 H2O = 2 a plastoquinol + O2. In terms of biological role, photosystem II (PSII) is a light-driven water:plastoquinone oxidoreductase that uses light energy to abstract electrons from H(2)O, generating O(2) and a proton gradient subsequently used for ATP formation. It consists of a core antenna complex that captures photons, and an electron transfer chain that converts photonic excitation into a charge separation. The D1/D2 (PsbA/PsbD) reaction center heterodimer binds P680, the primary electron donor of PSII as well as several subsequent electron acceptors. The polypeptide is Photosystem II protein D1 (Oenothera parviflora (Small-flowered evening primrose)).